A 311-amino-acid polypeptide reads, in one-letter code: Urease accessory protein UreD 2 (311 aa).

The protein belongs to the UreD family. As to quaternary structure, ureD, UreF and UreG form a complex that acts as a GTP-hydrolysis-dependent molecular chaperone, activating the urease apoprotein by helping to assemble the nickel containing metallocenter of UreC. The UreE protein probably delivers the nickel.

The protein resides in the cytoplasm. Its function is as follows. Required for maturation of urease via the functional incorporation of the urease nickel metallocenter. The polypeptide is Urease accessory protein UreD 2 (Methylorubrum extorquens (strain PA1) (Methylobacterium extorquens)).